Here is a 337-residue protein sequence, read N- to C-terminus: GTP 3',8-cyclase (337 aa).

The Radical SAM core domain maps to 17–243 (PFQRQYYYLR…HKSHTDGPAK (227 aa)). GTP is bound at residue Arg26. The [4Fe-4S] cluster site is built by Cys33 and Cys37. Position 39 (Tyr39) interacts with S-adenosyl-L-methionine. Residue Cys40 coordinates [4Fe-4S] cluster. A GTP-binding site is contributed by Arg76. Gly80 serves as a coordination point for S-adenosyl-L-methionine. Thr107 contributes to the GTP binding site. Residue Ser131 participates in S-adenosyl-L-methionine binding. Residue Lys168 coordinates GTP. Met202 lines the S-adenosyl-L-methionine pocket. 2 residues coordinate [4Fe-4S] cluster: Cys265 and Cys268. GTP is bound at residue 270–272 (RLR). Cys282 contributes to the [4Fe-4S] cluster binding site.

The protein belongs to the radical SAM superfamily. MoaA family. As to quaternary structure, monomer and homodimer. [4Fe-4S] cluster is required as a cofactor.

It carries out the reaction GTP + AH2 + S-adenosyl-L-methionine = (8S)-3',8-cyclo-7,8-dihydroguanosine 5'-triphosphate + 5'-deoxyadenosine + L-methionine + A + H(+). Its pathway is cofactor biosynthesis; molybdopterin biosynthesis. Functionally, catalyzes the cyclization of GTP to (8S)-3',8-cyclo-7,8-dihydroguanosine 5'-triphosphate. This is GTP 3',8-cyclase from Haemophilus influenzae (strain PittGG).